Reading from the N-terminus, the 964-residue chain is Glycine dehydrogenase (decarboxylating) (964 aa).

Positions 1-10 (MNSTLQNRNR) are enriched in polar residues. The disordered stretch occupies residues 1-25 (MNSTLQNRNRTNLERVSTDPLDTFP). An N6-(pyridoxal phosphate)lysine modification is found at Lys-713.

This sequence belongs to the GcvP family. As to quaternary structure, the glycine cleavage system is composed of four proteins: P, T, L and H. The cofactor is pyridoxal 5'-phosphate.

It catalyses the reaction N(6)-[(R)-lipoyl]-L-lysyl-[glycine-cleavage complex H protein] + glycine + H(+) = N(6)-[(R)-S(8)-aminomethyldihydrolipoyl]-L-lysyl-[glycine-cleavage complex H protein] + CO2. Its function is as follows. The glycine cleavage system catalyzes the degradation of glycine. The P protein binds the alpha-amino group of glycine through its pyridoxal phosphate cofactor; CO(2) is released and the remaining methylamine moiety is then transferred to the lipoamide cofactor of the H protein. The polypeptide is Glycine dehydrogenase (decarboxylating) (Leptospira borgpetersenii serovar Hardjo-bovis (strain JB197)).